The sequence spans 125 residues: Glycine cleavage system H protein (125 aa).

One can recognise a Lipoyl-binding domain in the interval 19–101; it reads VAVVGISDYA…EGKGWFMKLK (83 aa). Lys-60 carries the N6-lipoyllysine modification.

The protein belongs to the GcvH family. The glycine cleavage system is composed of four proteins: P, T, L and H. The cofactor is (R)-lipoate.

In terms of biological role, the glycine cleavage system catalyzes the degradation of glycine. The H protein shuttles the methylamine group of glycine from the P protein to the T protein. This Xanthobacter autotrophicus (strain ATCC BAA-1158 / Py2) protein is Glycine cleavage system H protein.